The chain runs to 129 residues: Histone H2A.J (129 aa).

A disordered region spans residues 1-22 (MSGRGKQGGKVRAKAKSRSSRA). N6-acetyllysine is present on residues Lys6 and Lys10. The span at 7–19 (QGGKVRAKAKSRS) shows a compositional bias: basic residues. Residue Lys10 is modified to N6-lactoyllysine; alternate. An N5-methylglutamine modification is found at Gln105. Thr121 is modified (phosphothreonine; by DCAF1).

This sequence belongs to the histone H2A family. As to quaternary structure, the nucleosome is a histone octamer containing two molecules each of H2A, H2B, H3 and H4 assembled in one H3-H4 heterotetramer and two H2A-H2B heterodimers. The octamer wraps approximately 147 bp of DNA. Monoubiquitination of Lys-120 (H2AXK119ub) gives a specific tag for epigenetic transcriptional repression. Following DNA double-strand breaks (DSBs), it is ubiquitinated through 'Lys-63' linkage of ubiquitin moieties. In terms of processing, glutamine methylation at Gln-105 (H2AQ104me) by FBL is specifically dedicated to polymerase I. It is present at 35S ribosomal DNA locus and impairs binding of the FACT complex. Post-translationally, phosphorylation on Ser-2 (H2AS1ph) is enhanced during mitosis. Phosphorylation on Ser-2 by RPS6KA5/MSK1 directly represses transcription. Acetylation of H3 inhibits Ser-2 phosphorylation by RPS6KA5/MSK1. Phosphorylation at Thr-121 (H2AT120ph) by DCAF1 is present in the regulatory region of many tumor suppresor genes and down-regulates their transcription.

The protein localises to the nucleus. The protein resides in the chromosome. Core component of nucleosome. Nucleosomes wrap and compact DNA into chromatin, limiting DNA accessibility to the cellular machineries which require DNA as a template. Histones thereby play a central role in transcription regulation, DNA repair, DNA replication and chromosomal stability. DNA accessibility is regulated via a complex set of post-translational modifications of histones, also called histone code, and nucleosome remodeling. The chain is Histone H2A.J from Mus musculus (Mouse).